We begin with the raw amino-acid sequence, 435 residues long: Nuclear receptor subfamily 6 group A member 1 (435 aa).

The nuclear receptor DNA-binding region spans 11–86 (QRACLICGDR…MGMNRKAIRE (76 aa)). NR C4-type zinc fingers lie at residues 14–34 (CLICGDRATGLHYGIISCEGC) and 50–69 (CSRDKNCVMSRKQRNRCQYC). The interval 84–157 (IREDGMPGGR…VSTPSSSRSM (74 aa)) is disordered. Residues 121-141 (NTSWSNNGDSDHSSPGNGVSE) are compositionally biased toward polar residues. A compositionally biased stretch (low complexity) spans 142-156 (SNQPSPVSTPSSSRS). One can recognise an NR LBD domain in the interval 204-435 (QSHTLINQLL…HSCKTSLTKE (232 aa)).

The protein belongs to the nuclear hormone receptor family. NR6 subfamily. Homodimer.

The protein localises to the cytoplasm. The protein resides in the nucleus. In terms of biological role, probable orphan nuclear receptor. Binds to a response element containing repeats of the motif 5'-AGGTCA-3'. Required for anterior-posterior patterning during organogenesis. Acts with chordin to play a role in patterning the midbrain-hindbrain. Isoform Em is required for integrin-mediated cell matrix interaction during neurulation and for the morphogenetic movements leading to formation of the neural tube. Also mediates the effect of retinoic acid on primary neurogenesis. This chain is Nuclear receptor subfamily 6 group A member 1, found in Xenopus tropicalis (Western clawed frog).